A 710-amino-acid chain; its full sequence is Polyribonucleotide nucleotidyltransferase (710 aa).

2 residues coordinate Mg(2+): aspartate 485 and aspartate 491. One can recognise a KH domain in the interval 552-611 (PKILTLTINPDKIRDVIGPSGKVINKIIEETGVKIDIEQDGTVYISSLDTAMNQKAKQII). One can recognise an S1 motif domain in the interval 621 to 689 (GETYHGKVKR…NQGRVNLSRK (69 aa)).

This sequence belongs to the polyribonucleotide nucleotidyltransferase family. It depends on Mg(2+) as a cofactor.

It localises to the cytoplasm. It carries out the reaction RNA(n+1) + phosphate = RNA(n) + a ribonucleoside 5'-diphosphate. Its function is as follows. Involved in mRNA degradation. Catalyzes the phosphorolysis of single-stranded polyribonucleotides processively in the 3'- to 5'-direction. The chain is Polyribonucleotide nucleotidyltransferase from Shouchella clausii (strain KSM-K16) (Alkalihalobacillus clausii).